The following is a 388-amino-acid chain: MNQQELFDKYQDTFAAQGQDLFFSPGRINVIGEHTDYNGGHVFPCAISLGTYGVYGVRDDDQVQLFSGNMEGDVVSFAITDEAPEEAEDRKWANYFKGMLVYLRQKGFKIDHGFNLYVYGNLPYGAGLSSSASIEMLMGQVLKDEFNLDIDQIDLVKLGQKTENDFVGLNSGIMDQFAVGMGKKDNAIFLDCNTLEYKYMPLELGDYEIVIMSTNKKHSLAASAYNDRVAECGEALKRLQTKLDINSLGEIDEDTFDEYSYLLNDETLLKRTRHAVFENQRTIQATKAMTDGDLEKLGRLINASHVSLHFDYEVSGTELDTLAEAAWQQPGVLGARMIGGGFAGSAIAIVKKDQAENLKQKVGEIYREKVGYDASFYDAEIVDGPHKL.

33–36 is a substrate binding site; it reads EHTD. ATP-binding positions include serine 67 and 125-131; that span reads GAGLSSS. Serine 131 and glutamate 163 together coordinate Mg(2+). Aspartate 175 functions as the Proton acceptor in the catalytic mechanism. Residue tyrosine 225 coordinates substrate.

This sequence belongs to the GHMP kinase family. GalK subfamily.

It localises to the cytoplasm. It carries out the reaction alpha-D-galactose + ATP = alpha-D-galactose 1-phosphate + ADP + H(+). The protein operates within carbohydrate metabolism; galactose metabolism. In terms of biological role, catalyzes the transfer of the gamma-phosphate of ATP to D-galactose to form alpha-D-galactose-1-phosphate (Gal-1-P). The polypeptide is Galactokinase (Limosilactobacillus fermentum (strain NBRC 3956 / LMG 18251) (Lactobacillus fermentum)).